Here is a 457-residue protein sequence, read N- to C-terminus: Dihydrolipoyl dehydrogenase (457 aa).

Residues 32–40, Lys49, and Ala113 contribute to the FAD site; that span reads EKQYFGGVC. Cys40 and Cys45 are disulfide-bonded. Residues 178–182, Val235, and 262–265 each bind NAD(+); these read GGGVI and SIGR. Positions 303 and 311 each coordinate FAD. Catalysis depends on His437, which acts as the Proton acceptor.

It belongs to the class-I pyridine nucleotide-disulfide oxidoreductase family. In terms of assembly, homodimer. Requires FAD as cofactor.

Its subcellular location is the cytoplasm. The catalysed reaction is N(6)-[(R)-dihydrolipoyl]-L-lysyl-[protein] + NAD(+) = N(6)-[(R)-lipoyl]-L-lysyl-[protein] + NADH + H(+). In terms of biological role, lipoamide dehydrogenase is a component of the alpha-ketoacid dehydrogenase complexes. This Mycoplasma genitalium (strain ATCC 33530 / DSM 19775 / NCTC 10195 / G37) (Mycoplasmoides genitalium) protein is Dihydrolipoyl dehydrogenase (pdhD).